The chain runs to 91 residues: Large ribosomal subunit protein eL34 (91 aa).

Residues 48-69 (RGRPVEMRKLPKTKKRPERPMP) are disordered.

The protein belongs to the eukaryotic ribosomal protein eL34 family.

This Pyrococcus horikoshii (strain ATCC 700860 / DSM 12428 / JCM 9974 / NBRC 100139 / OT-3) protein is Large ribosomal subunit protein eL34 (rpl34e).